The primary structure comprises 101 residues: RNA-binding protein Hfq (101 aa).

The Sm domain occupies 9–68 (DPFLNALRRERVPVSIYLVNGIKLQGQVESFDQFVILLKNTVSQMVYKHAISTVVPSPPV). The interval 62–101 (VVPSPPVSHHSNTPSGSTNNYHGSNPSAPQQPQQDSDDAE) is disordered. A compositionally biased stretch (polar residues) spans 70 to 86 (HHSNTPSGSTNNYHGSN).

This sequence belongs to the Hfq family. Homohexamer.

In terms of biological role, RNA chaperone that binds small regulatory RNA (sRNAs) and mRNAs to facilitate mRNA translational regulation in response to envelope stress, environmental stress and changes in metabolite concentrations. Also binds with high specificity to tRNAs. In Yersinia pestis (strain Pestoides F), this protein is RNA-binding protein Hfq.